The following is a 401-amino-acid chain: Mu-type opioid receptor (401 aa).

Topologically, residues 1–69 are extracellular; that stretch reads MDSSADPRNA…CPPTGSPSMV (69 aa). Asparagine 9, asparagine 12, asparagine 34, asparagine 41, and asparagine 49 each carry an N-linked (GlcNAc...) asparagine glycan. A helical transmembrane segment spans residues 70 to 94; that stretch reads TAITIMALYSIVCVVGLFGNFLVMY. The Cytoplasmic portion of the chain corresponds to 95–107; it reads VIVRYTKMKTATN. The chain crosses the membrane as a helical span at residues 108-132; that stretch reads IYIFNLALADALATSTLPFQSVNYL. At 133–143 the chain is on the extracellular side; sequence MGTWPFGTILC. Cysteines 143 and 220 form a disulfide. Residues 144 to 166 traverse the membrane as a helical segment; sequence KIVISIDYYNMFTSIFTLCTMSV. The Cytoplasmic portion of the chain corresponds to 167-186; that stretch reads DRYIAVCHPVKALDFRTPRN. Tyrosine 169 is modified (phosphotyrosine). Residues 187 to 208 traverse the membrane as a helical segment; sequence AKIINVCNWILSSAIGLPVMFM. Over 209-231 the chain is Extracellular; it reads ATTKYRNGSIDCALTFSHPTWYW. A helical membrane pass occupies residues 232-256; it reads ENLLKICVFIFAFIMPVLIITVCYG. The Cytoplasmic segment spans residues 257–280; the sequence is LMILRLKSVRMLSGSKEKDRNLRR. The helical transmembrane segment at 281 to 307 threads the bilayer; the sequence is ITRMVLVVVAVFIVCWTPIHIYVIIKA. The Extracellular portion of the chain corresponds to 308–315; the sequence is LITIPETT. Residues 316–339 form a helical membrane-spanning segment; that stretch reads FQTVSWHFCIALGYTNSCLNPVLY. Residues 335 to 339 carry the NPxxY; plays a role in stabilizing the activated conformation of the receptor motif; sequence NPVLY. Topologically, residues 340 to 401 are cytoplasmic; the sequence is AFLDENFKRC…NLEAETAPLP (62 aa). A lipid anchor (S-palmitoyl cysteine) is attached at cysteine 354. The segment at 365 to 385 is disordered; the sequence is NSARIRQNTRDHPSTANTVDR. At serine 366 the chain carries Phosphoserine. Position 373 is a phosphothreonine (threonine 373). The residue at position 378 (serine 378) is a Phosphoserine. Position 397 is a phosphothreonine (threonine 397).

The protein belongs to the G-protein coupled receptor 1 family. As to quaternary structure, forms homooligomers and heterooligomers with other GPCRs, such as OPRD1, OPRK1, OPRL1, NPFFR2, ADRA2A, SSTR2, CNR1 and CCR5 (probably in dimeric forms). Interacts with heterotrimeric G proteins; interaction with a heterotrimeric complex containing GNAI1, GNB1 and GNG2 stabilizes the active conformation of the receptor and increases its affinity for endomorphin-2, the synthetic opioid peptide DAMGO and for morphinan agonists. Interacts with PPL; the interaction disrupts agonist-mediated G-protein activation. Interacts (via C-terminus) with DNAJB4 (via C-terminus). Interacts with calmodulin; the interaction inhibits the constitutive activity of OPRM1; it abolishes basal and attenuates agonist-stimulated G-protein coupling. Interacts with FLNA, PLD2, RANBP9 and WLS and GPM6A. Interacts with RTP4. Interacts with SYP and GNAS. Interacts with RGS9, RGS17, RGS20, RGS4, PPP1R9B and HINT1. Post-translationally, phosphorylated. Differentially phosphorylated in basal and agonist-induced conditions. Agonist-mediated phosphorylation modulates receptor internalization. Phosphorylated by GRK2 in a agonist-dependent manner. Phosphorylation at Tyr-169 requires receptor activation, is dependent on non-receptor protein tyrosine kinase Src and results in a decrease in agonist efficacy by reducing G-protein coupling efficiency. Phosphorylated on tyrosine residues; the phosphorylation is involved in agonist-induced G-protein-independent receptor down-regulation. Phosphorylation at Ser-378 is involved in G-protein-dependent but not beta-arrestin-dependent activation of the ERK pathway. Ubiquitinated. A basal ubiquitination seems not to be related to degradation. Ubiquitination is increased upon formation of OPRM1:OPRD1 oligomers leading to proteasomal degradation; the ubiquitination is diminished by RTP4.

The protein localises to the cell membrane. Its subcellular location is the cell projection. The protein resides in the axon. It localises to the perikaryon. It is found in the dendrite. The protein localises to the endosome. Functionally, receptor for endogenous opioids such as beta-endorphin and endomorphin. Receptor for natural and synthetic opioids including morphine, heroin, DAMGO, fentanyl, etorphine, buprenorphin and methadone. Also activated by enkephalin peptides, such as Met-enkephalin or Met-enkephalin-Arg-Phe, with higher affinity for Met-enkephalin-Arg-Phe. Agonist binding to the receptor induces coupling to an inactive GDP-bound heterotrimeric G-protein complex and subsequent exchange of GDP for GTP in the G-protein alpha subunit leading to dissociation of the G-protein complex with the free GTP-bound G-protein alpha and the G-protein beta-gamma dimer activating downstream cellular effectors. The agonist- and cell type-specific activity is predominantly coupled to pertussis toxin-sensitive G(i) and G(o) G alpha proteins, GNAI1, GNAI2, GNAI3 and GNAO1, and to a lesser extent to pertussis toxin-insensitive G alpha proteins GNAZ and GNA15. They mediate an array of downstream cellular responses, including inhibition of adenylate cyclase activity and both N-type and L-type calcium channels, activation of inward rectifying potassium channels, mitogen-activated protein kinase (MAPK), phospholipase C (PLC), phosphoinositide/protein kinase (PKC), phosphoinositide 3-kinase (PI3K) and regulation of NF-kappa-B. Also couples to adenylate cyclase stimulatory G alpha proteins. The selective temporal coupling to G-proteins and subsequent signaling can be regulated by RGSZ proteins, such as RGS9, RGS17 and RGS4. Phosphorylation by members of the GPRK subfamily of Ser/Thr protein kinases and association with beta-arrestins is involved in short-term receptor desensitization. Beta-arrestins associate with the GPRK-phosphorylated receptor and uncouple it from the G-protein thus terminating signal transduction. The phosphorylated receptor is internalized through endocytosis via clathrin-coated pits which involves beta-arrestins. The activation of the ERK pathway occurs either in a G-protein-dependent or a beta-arrestin-dependent manner and is regulated by agonist-specific receptor phosphorylation. Acts as a class A G-protein coupled receptor (GPCR) which dissociates from beta-arrestin at or near the plasma membrane and undergoes rapid recycling. Receptor down-regulation pathways are varying with the agonist and occur dependent or independent of G-protein coupling. Endogenous ligands induce rapid desensitization, endocytosis and recycling. Heterooligomerization with other GPCRs can modulate agonist binding, signaling and trafficking properties. Involved in neurogenesis. The polypeptide is Mu-type opioid receptor (OPRM1) (Sus scrofa (Pig)).